The sequence spans 503 residues: Potassium voltage-gated channel subfamily V member 1 (503 aa).

The Cytoplasmic segment spans residues 1–213 (MELLPPRGRA…EKPGSCTAAR (213 aa)). A helical transmembrane segment spans residues 214–234 (IFGVISIIFVAVSIVNMALMS). The Extracellular portion of the chain corresponds to 235–246 (AELSWLDPQLLE). A helical transmembrane segment spans residues 247–267 (ILEYVCISWFTGEFVLRFLCV). The Cytoplasmic segment spans residues 268 to 279 (RDRCRFLRKVPN). Residues 280-300 (IIDLLAILPFYITLLVESLSG) traverse the membrane as a helical segment. Residues 301-312 (SQTTQELENVGR) are Extracellular-facing. A helical; Voltage-sensor transmembrane segment spans residues 313 to 334 (IVQVLRLLRALRMLKLGRHSTG). Over 335–348 (LRSLGMTITQCYEE) the chain is Cytoplasmic. A helical transmembrane segment spans residues 349-369 (VGLLLLFLSVGISIFSTVEYF). The Selectivity filter signature appears at 395–400 (TVGYGD). Residues 410 to 430 (IVAFMCILSGILVLALPIAII) form a helical membrane-spanning segment. The Cytoplasmic segment spans residues 431–503 (NDRFSACYFT…RSSGGDDFWF (73 aa)).

Belongs to the potassium channel family. V (TC 1.A.1.2) subfamily. Kv8.1/KCNV1 sub-subfamily. As to quaternary structure, heteromultimer with KCNB1 and KCNB2. Interacts with KCNC4 and KCND1.

The protein resides in the cell membrane. Potassium channel subunit that does not form functional channels by itself. Modulates KCNB1 and KCNB2 channel activity by shifting the threshold for inactivation to more negative values and by slowing the rate of inactivation. Can down-regulate the channel activity of KCNB1, KCNB2, KCNC4 and KCND1, possibly by trapping them in intracellular membranes. This is Potassium voltage-gated channel subfamily V member 1 (KCNV1) from Bos taurus (Bovine).